The chain runs to 410 residues: MIDMLVLRLPFIDSLVCSRLSGNDLIAFVDLSKIATLSGMNLSARTVEYHIDGDLTVSGLSHPFESLPTHYSGIAFKIYEGSKNFYPCVEIKASPAKVLQGHNVFGTTDLALCSEALLLNFANSLPCLYDLLDVNATTISRIDATFSARAPNENIAKQVIDHLRNVSNGQTKSTRSQNWESTVTWNETSRHRTLVAYLKHVELQHQIQQLSSKPSAKMTSYQKEQLKVLSNPDLLEFASGLVRFEARIETRYLKSFGLPLNLFDAIRFASDYNRQGKDLIFDLWSFSFSELFKAFEGDSMNIYDDSAVLDAIQSKHFTITPSGKTSFAKASRYFGFYRRLVNEGYDSVALTMPRNSFWRYVSALVECGIPKSQLMNLSTCNNVVPLVRFINVDFSSQRPDWYNEPVLKIA.

An N-formylmethionine modification is found at Met-1.

It belongs to the inovirus G2P protein family.

It carries out the reaction ATP + (deoxyribonucleotide)n-3'-hydroxyl + 5'-phospho-(deoxyribonucleotide)m = (deoxyribonucleotide)n+m + AMP + diphosphate.. Its function is as follows. Isoform G2P plays an essential role in viral DNA replication. Binds the origin of replication and cleaves the dsDNA replicative form I (RFI) and becomes covalently bound to it via phosphotyrosine bond, generating the dsDNA replicative form II (RFII). In turn, viral DNA replication initiates at the 3'-OH of the cleavage site. After one round of rolling circle synthesis, protein G2P is linked to the newly synthesized ssDNA and joins the ends of the displaced strand to generate a circular single-stranded molecule ready to be packed into a virion. Isoform G10P protein binds to double-stranded DNA and prevents hydrolysis by nucleases. Additionally, G10P is an inhibitor of DNA replication and may have a role in the transition from semiconservative replicative form DNA replication to single-stranded DNA synthesis in the life cycle. The polypeptide is Replication-associated protein G2P (II) (Enterobacteria phage fd (Bacteriophage fd)).